A 153-amino-acid polypeptide reads, in one-letter code: Xanthine-guanine phosphoribosyltransferase (153 aa).

5-phospho-alpha-D-ribose 1-diphosphate contacts are provided by residues arginine 37–glycine 38, arginine 69, and aspartate 88–threonine 96. Arginine 69 is a binding site for GMP. Aspartate 89 serves as a coordination point for Mg(2+). Aspartate 92 and isoleucine 135 together coordinate guanine. Residues aspartate 92 and isoleucine 135 each coordinate xanthine. Residues aspartate 92–threonine 96 and tryptophan 134–isoleucine 135 each bind GMP.

Belongs to the purine/pyrimidine phosphoribosyltransferase family. XGPT subfamily. In terms of assembly, homotetramer. Requires Mg(2+) as cofactor.

The protein localises to the cell inner membrane. The enzyme catalyses GMP + diphosphate = guanine + 5-phospho-alpha-D-ribose 1-diphosphate. It carries out the reaction XMP + diphosphate = xanthine + 5-phospho-alpha-D-ribose 1-diphosphate. It catalyses the reaction IMP + diphosphate = hypoxanthine + 5-phospho-alpha-D-ribose 1-diphosphate. The protein operates within purine metabolism; GMP biosynthesis via salvage pathway; GMP from guanine: step 1/1. Its pathway is purine metabolism; XMP biosynthesis via salvage pathway; XMP from xanthine: step 1/1. In terms of biological role, purine salvage pathway enzyme that catalyzes the transfer of the ribosyl-5-phosphate group from 5-phospho-alpha-D-ribose 1-diphosphate (PRPP) to the N9 position of the 6-oxopurines guanine and xanthine to form the corresponding ribonucleotides GMP (guanosine 5'-monophosphate) and XMP (xanthosine 5'-monophosphate), with the release of PPi. To a lesser extent, also acts on hypoxanthine. The protein is Xanthine-guanine phosphoribosyltransferase of Photorhabdus laumondii subsp. laumondii (strain DSM 15139 / CIP 105565 / TT01) (Photorhabdus luminescens subsp. laumondii).